We begin with the raw amino-acid sequence, 509 residues long: ATP synthase subunit alpha (509 aa).

Glycine 169–threonine 176 serves as a coordination point for ATP.

It belongs to the ATPase alpha/beta chains family. As to quaternary structure, F-type ATPases have 2 components, CF(1) - the catalytic core - and CF(0) - the membrane proton channel. CF(1) has five subunits: alpha(3), beta(3), gamma(1), delta(1), epsilon(1). CF(0) has three main subunits: a(1), b(2) and c(9-12). The alpha and beta chains form an alternating ring which encloses part of the gamma chain. CF(1) is attached to CF(0) by a central stalk formed by the gamma and epsilon chains, while a peripheral stalk is formed by the delta and b chains.

It localises to the cell inner membrane. The enzyme catalyses ATP + H2O + 4 H(+)(in) = ADP + phosphate + 5 H(+)(out). Its function is as follows. Produces ATP from ADP in the presence of a proton gradient across the membrane. The alpha chain is a regulatory subunit. This Brucella abortus (strain S19) protein is ATP synthase subunit alpha.